The chain runs to 91 residues: Large ribosomal subunit protein bL31B (91 aa).

Belongs to the bacterial ribosomal protein bL31 family. Type B subfamily. As to quaternary structure, part of the 50S ribosomal subunit.

The sequence is that of Large ribosomal subunit protein bL31B from Neisseria meningitidis serogroup C (strain 053442).